Consider the following 164-residue polypeptide: Putative pre-16S rRNA nuclease (164 aa).

It belongs to the YqgF nuclease family.

It is found in the cytoplasm. In terms of biological role, could be a nuclease involved in processing of the 5'-end of pre-16S rRNA. In Synechococcus sp. (strain CC9902), this protein is Putative pre-16S rRNA nuclease.